Reading from the N-terminus, the 31-residue chain is Toxin BmKK12 (31 aa).

Q1 carries the pyrrolidone carboxylic acid modification. Cystine bridges form between C4–C20, C10–C25, and C14–C27. Residue P31 is modified to Proline amide.

This sequence belongs to the short scorpion toxin superfamily. Potassium channel inhibitor family. Alpha-KTx 17 subfamily. The N-terminus is blocked. In terms of tissue distribution, expressed by the venom gland.

Its subcellular location is the secreted. In terms of biological role, blocker of potassium channels (Kv). The polypeptide is Toxin BmKK12 (Olivierus martensii (Manchurian scorpion)).